Reading from the N-terminus, the 334-residue chain is Glycerol-3-phosphate dehydrogenase [NAD(P)+] 2 (334 aa).

Residues Trp-16, Arg-36, Arg-37, and Lys-110 each coordinate NADPH. Lys-110 and Gly-140 together coordinate sn-glycerol 3-phosphate. Ala-144 contacts NADPH. Sn-glycerol 3-phosphate contacts are provided by Lys-195, Asp-248, Ser-258, Arg-259, and Asn-260. Lys-195 acts as the Proton acceptor in catalysis. Arg-259 contacts NADPH. NADPH-binding residues include Val-282 and Glu-284.

This sequence belongs to the NAD-dependent glycerol-3-phosphate dehydrogenase family.

Its subcellular location is the cytoplasm. It carries out the reaction sn-glycerol 3-phosphate + NAD(+) = dihydroxyacetone phosphate + NADH + H(+). The enzyme catalyses sn-glycerol 3-phosphate + NADP(+) = dihydroxyacetone phosphate + NADPH + H(+). It functions in the pathway membrane lipid metabolism; glycerophospholipid metabolism. Catalyzes the reduction of the glycolytic intermediate dihydroxyacetone phosphate (DHAP) to sn-glycerol 3-phosphate (G3P), the key precursor for phospholipid synthesis. The sequence is that of Glycerol-3-phosphate dehydrogenase [NAD(P)+] 2 from Mycobacterium tuberculosis (strain ATCC 25618 / H37Rv).